The sequence spans 54 residues: MGKYKPPAERKYGKGVQSCQRCGSKDSVIQKYGIYLCRQCFREVAYELGFRKYW.

The Zn(2+) site is built by cysteine 19, cysteine 22, cysteine 37, and cysteine 40.

It belongs to the universal ribosomal protein uS14 family. Zinc-binding uS14 subfamily. In terms of assembly, part of the 30S ribosomal subunit. The cofactor is Zn(2+).

Binds 16S rRNA, required for the assembly of 30S particles. The protein is Small ribosomal subunit protein uS14 of Saccharolobus solfataricus (strain ATCC 35092 / DSM 1617 / JCM 11322 / P2) (Sulfolobus solfataricus).